We begin with the raw amino-acid sequence, 569 residues long: Ribosome-inactivating protein SNAI' (569 aa).

A signal peptide spans 1–28 (MKVVATILYLVVLAICGLGIHGAHPTHS). N-linked (GlcNAc...) asparagine glycosylation is present at N40. E201 is a catalytic residue. 3 disulfides stabilise this stretch: C286-C311, C328-C347, and C369-C381. Ricin B-type lectin domains lie at 315-435 (EEVT…WIVG) and 437-565 (VEPL…WIAS). One copy of the 1-alpha repeat lies at 325-365 (DGFCAEVKNGDEKDGTPVQLSSCGEQSNQQWTFSTDGTIQS). The stretch at 366 to 401 (LGKCLTTSSSVMIYNCKVVPPESTKWVVSIDGTITN) is one 1-beta repeat. One copy of the 1-gamma repeat lies at 404 to 436 (SGLVLTAPKAAEGTLVSLEKNVHAARQGWIVGN). Residues 448 to 488 (EQMCLETNPGNNDVSLGDCSVKSASKVDQKWALYGDGTIRV) form a 2-alpha repeat. 2 cysteine pairs are disulfide-bonded: C451–C466 and C495–C512. A 2-beta repeat occupies 492 to 530 (RSLCVTSEGKSSNEPIIILKCLGWANQRWVFNTDGTISN). One copy of the 2-gamma repeat lies at 533 to 566 (SKLVMHVDQNDVPLRKIILSHPSGTSNQQWIAST).

In the N-terminal section; belongs to the ribosome-inactivating protein family. Type 2 RIP subfamily. In terms of assembly, disulfide-linked dimer of A and B chains.

It catalyses the reaction Endohydrolysis of the N-glycosidic bond at one specific adenosine on the 28S rRNA.. Its function is as follows. The A chain is responsible for inhibiting protein synthesis through the catalytic inactivation of 60S ribosomal subunits by removing adenine from position 4,324 of 28S rRNA. The B chain binds to cell receptors and probably facilitates the entry into the cell of the A chain; B chains are also responsible for cell agglutination (lectin activity). Agglutination is inhibited by Neu5Ac(alpha2,6)lactose, and N-linked glycoproteins such as fetuin and orosomucoid. This is Ribosome-inactivating protein SNAI' from Sambucus nigra (European elder).